We begin with the raw amino-acid sequence, 114 residues long: Ferritin-like protein (114 aa).

3 residues coordinate Fe cation: E29, E59, and H62. A cargo-loading peptide region spans residues 86–114 (FTDKPITEIEEETSGGSENTGGDLGIRKL). Residues 94–114 (IEEETSGGSENTGGDLGIRKL) are disordered. The segment covering 103–114 (ENTGGDLGIRKL) has biased composition (gly residues).

This sequence belongs to the ferritin-like superfamily. Probably forms a decamer which binds to the pentameric axis of the interior of the protein shell; as the Flp cargo protein is flexible, packing into the shell is not rigid. 3, 4 or 5 cargo decamers bind inside the encapulin nanocompartment. Fe cation serves as cofactor.

The protein resides in the encapsulin nanocompartment. In terms of biological role, cargo protein of a type 1 encapsulin nanocompartment. A ferritin-like protein that probably stores iron in the encapsulin nanocompartment. The protein is Ferritin-like protein of Thermotoga maritima (strain ATCC 43589 / DSM 3109 / JCM 10099 / NBRC 100826 / MSB8).